The chain runs to 390 residues: Protein NDRG4-A (390 aa).

The interval 356-390 (LTSASSVDGSRPRPCTQSESSDGIGQINHTMEVSC) is disordered. Positions 370 to 390 (CTQSESSDGIGQINHTMEVSC) are enriched in polar residues.

The protein belongs to the NDRG family.

Its subcellular location is the cytoplasm. The protein localises to the cytosol. Its function is as follows. Contributes to the maintenance of intracerebral BDNF levels within the normal range. May enhance growth factor-induced ERK1 and ERK2 phosphorylation. May attenuate growth factor-promoted ELK1 phosphorylation in a microtubule-dependent manner. This Xenopus laevis (African clawed frog) protein is Protein NDRG4-A (ndrg4-a).